A 223-amino-acid chain; its full sequence is Cytidylate kinase (223 aa).

ATP is bound at residue 11–19 (GPAGVGKST).

The protein belongs to the cytidylate kinase family. Type 1 subfamily.

The protein resides in the cytoplasm. The catalysed reaction is CMP + ATP = CDP + ADP. It carries out the reaction dCMP + ATP = dCDP + ADP. This is Cytidylate kinase from Maridesulfovibrio salexigens (strain ATCC 14822 / DSM 2638 / NCIMB 8403 / VKM B-1763) (Desulfovibrio salexigens).